We begin with the raw amino-acid sequence, 736 residues long: Probable potassium transport system protein Kup 2 (736 aa).

12 consecutive transmembrane segments (helical) span residues 1–21 (MAIVALGVVYGDIGTSPLYTA), 42–62 (MLSLVFWSITLITTVKYVLIA), 84–104 (GAWLAIPAMLGGAAFLADSVL), 126–146 (LFDENPSLTLMITVVIIVILF), 156–176 (IGKVFGSMVLVWFGFLAIVGV), 204–224 (AAGIALMGTVFLSTTGAEALY), 239–259 (WPFIKVALVLNYFGQGAWMLA), 287–307 (AVILSVSAGVIASQALITGAF), 334–354 (LYIPVVNGVLCVSTLAVLAIF), 364–384 (YGLALTITMITTTVLLGVYLW), 390–410 (VGAIVFTVLFLAIQAMFFIAS), and 414–434 (FLHGGWFTMLLTAAILFVMYT). 2 disordered regions span residues 649 to 678 (TDTAKTIPTPTPTRAVADPAAVPDPMDTTS) and 693 to 736 (AEAR…KQKR). 2 stretches are compositionally biased toward low complexity: residues 660-677 (PTRAVADPAAVPDPMDTT) and 700-709 (EAAAADAPAE). Residues 710-721 (QGDKGDKGKAEN) show a composition bias toward basic and acidic residues.

The protein belongs to the HAK/KUP transporter (TC 2.A.72) family.

It is found in the cell membrane. The catalysed reaction is K(+)(in) + H(+)(in) = K(+)(out) + H(+)(out). Its function is as follows. Transport of potassium into the cell. Likely operates as a K(+):H(+) symporter. This is Probable potassium transport system protein Kup 2 from Bifidobacterium longum (strain NCC 2705).